Consider the following 122-residue polypeptide: Large ribosomal subunit protein uL18 (122 aa).

The protein belongs to the universal ribosomal protein uL18 family. Part of the 50S ribosomal subunit; part of the 5S rRNA/L5/L18/L25 subcomplex. Contacts the 5S and 23S rRNAs.

Functionally, this is one of the proteins that bind and probably mediate the attachment of the 5S RNA into the large ribosomal subunit, where it forms part of the central protuberance. In Thermotoga petrophila (strain ATCC BAA-488 / DSM 13995 / JCM 10881 / RKU-1), this protein is Large ribosomal subunit protein uL18.